The following is a 719-amino-acid chain: Putative ankyrin repeat protein RBE_0319 (719 aa).

9 ANK repeats span residues 377–406, 408–438, 442–472, 476–506, 510–540, 544–572, 576–605, 609–639, and 642–672; these read VAEE…EISS, TLIK…NINE, NGGT…EVNK, YGFT…EINQ, YQTT…KFNE, LGYT…DINQ, DGYT…NVNE, HGLT…EVSE, and QYGT…NLNK.

The polypeptide is Putative ankyrin repeat protein RBE_0319 (Rickettsia bellii (strain RML369-C)).